The chain runs to 269 residues: Aminoglycoside N(3)-acetyltransferase III (269 aa).

Belongs to the antibiotic N-acetyltransferase family.

The enzyme catalyses a 2-deoxystreptamine antibiotic + acetyl-CoA = an N(3)-acetyl-2-deoxystreptamine antibiotic + CoA + H(+). Its function is as follows. Resistance to antibiotics containing the 2-deoxy-streptamine ring including gentamicin, kanamycin, tobramycin, neomycin and apramycin. The protein is Aminoglycoside N(3)-acetyltransferase III (aac3-Vb) of Serratia marcescens.